Here is a 362-residue protein sequence, read N- to C-terminus: Ferredoxin--NADP reductase, leaf isozyme 1, chloroplastic (362 aa).

The transit peptide at 1–62 (MAAVTAAAVS…DAAAVAAAPA (62 aa)) directs the protein to the chloroplast. The 123-residue stretch at 83–205 (KEPYVGKCLL…TGPVGKEMLM (123 aa)) folds into the FAD-binding FR-type domain. FAD contacts are provided by residues 141–144 (RLYS), 162–164 (CVK), tyrosine 168, 179–181 (VCS), and threonine 220. The NADP(+) site is built by serine 144 and lysine 164. Cysteine 180 and cysteine 185 form a disulfide bridge. Serine 181 is modified (phosphoserine). NADP(+) contacts are provided by residues threonine 220, 252 to 253 (VP), 282 to 283 (SR), lysine 292, 321 to 322 (GL), and glutamate 360.

This sequence belongs to the ferredoxin--NADP reductase type 1 family. In terms of assembly, component of high molecular weight thylakoid LFNRs-containing protein complexes containing LIR1, LFNR1, LFNR2, TIC62 and TROL proteins. Interacts directly with LIR1 and TIC62; LIR1 increases the affinity of LFNR1 and LFNR2 for TIC62. The cofactor is FAD. In terms of processing, may form interchain disulfide bonds with LIR1.

It localises to the plastid. Its subcellular location is the chloroplast stroma. The protein resides in the chloroplast thylakoid membrane. It catalyses the reaction 2 reduced [2Fe-2S]-[ferredoxin] + NADP(+) + H(+) = 2 oxidized [2Fe-2S]-[ferredoxin] + NADPH. It participates in energy metabolism; photosynthesis. In terms of biological role, may play a key role in regulating the relative amounts of cyclic and non-cyclic electron flow to meet the demands of the plant for ATP and reducing power. In Oryza sativa subsp. japonica (Rice), this protein is Ferredoxin--NADP reductase, leaf isozyme 1, chloroplastic.